Reading from the N-terminus, the 336-residue chain is Mitochondrial import receptor subunit TOM40 homolog (336 aa).

Residues 1–58 (MGNVLAASSPAPPAAGSPPAPGLVSVPPGFTMPPVAGLTPTPDKKETQEDRLPNPGTF) form a disordered region. Over residues 10–21 (PAPPAAGSPPAP) the composition is skewed to pro residues. Residues 42-52 (PDKKETQEDRL) show a composition bias toward basic and acidic residues.

It belongs to the Tom40 family. In terms of assembly, forms part of the preprotein translocase complex of the outer mitochondrial membrane (TOM complex). Interacts with mitochondrial targeting sequences.

It localises to the mitochondrion outer membrane. Functionally, channel-forming protein essential for import of protein precursors into mitochondria. The polypeptide is Mitochondrial import receptor subunit TOM40 homolog (tomm40) (Xenopus tropicalis (Western clawed frog)).